The chain runs to 203 residues: Probable host range protein 2-3 (203 aa).

The tract at residues 182 to 203 (LEEEDEEKIADTGNDNQKDAED) is disordered.

The protein belongs to the poxviridae C7 protein family.

In terms of biological role, plays a role for multiplication of the virus in different cell types. This Myxoma virus (strain Lausanne) (MYXV) protein is Probable host range protein 2-3.